The sequence spans 210 residues: MGKSAVIFVERATPATLTELKDALSNSILSVRDPWSIDFRTYRCSIKNLPADVSKLMYSITFHHHGRQTVLIKDNSAMVTTAAAADIPPALVFNGSSTGVPESIDTILSSKLSNIWMQRQLIKGDAGETLILDGLTVRLVNLFSSTGFKGLLIELQADEAGEFETKIAGIEGHLAEIRAKEYKTSSDSLGPDTSNEICDLAYQYVRALEL.

It belongs to the Mediator complex subunit 20 family. As to quaternary structure, component of the Mediator complex, which is composed of at least 21 subunits that form three structurally distinct submodules. The Mediator head module contains MED6, MED8, MED11, SRB4/MED17, SRB5/MED18, ROX3/MED19, SRB2/MED20 and SRB6/MED22, the middle module contains MED1, MED4, NUT1/MED5, MED7, CSE2/MED9, NUT2/MED10, SRB7/MED21 and SOH1/MED31, and the tail module contains MED2, PGD1/MED3, RGR1/MED14, GAL11/MED15 and SIN4/MED16. The head and the middle modules interact directly with RNA polymerase II, whereas the elongated tail module interacts with gene-specific regulatory proteins. MED1 interacts directly with MED4 and MED7. SRB2/MED20 interacts directly with SRB4/MED17 and SRB5/MED18.

The protein localises to the nucleus. In terms of biological role, component of the Mediator complex, a coactivator involved in the regulated transcription of nearly all RNA polymerase II-dependent genes. Mediator functions as a bridge to convey information from gene-specific regulatory proteins to the basal RNA polymerase II transcription machinery. The Mediator complex, having a compact conformation in its free form, is recruited to promoters by direct interactions with regulatory proteins and serves for the assembly of a functional preinitiation complex with RNA polymerase II and the general transcription factors. The Mediator complex unfolds to an extended conformation and partially surrounds RNA polymerase II, specifically interacting with the unphosphorylated form of the C-terminal domain (CTD) of RNA polymerase II. The Mediator complex dissociates from the RNA polymerase II holoenzyme and stays at the promoter when transcriptional elongation begins. This is Mediator of RNA polymerase II transcription subunit 20 (SRB2) from Saccharomyces cerevisiae (strain ATCC 204508 / S288c) (Baker's yeast).